Here is a 307-residue protein sequence, read N- to C-terminus: Fructokinase (307 aa).

It belongs to the carbohydrate kinase PfkB family.

The enzyme catalyses D-fructose + ATP = D-fructose 6-phosphate + ADP + H(+). This is Fructokinase (cscK) from Escherichia coli.